We begin with the raw amino-acid sequence, 340 residues long: Phosphate carrier protein, mitochondrial (340 aa).

Residues 1-27 constitute a mitochondrion transit peptide; sequence MSVFSQLAESSKQNPFSLPVRSGNCAS. Solcar repeat units follow at residues 41–125, 138–222, and 239–317; these read KYYA…FKNV, YRTS…TVEA, and EQLV…VKVA. The next 6 helical transmembrane spans lie at 47–67, 95–114, 141–161, 200–220, 241–261, and 297–317; these read ALGG…LDLV, RALV…QGLG, SLYL…LAPM, PLWM…EKTV, LVVT…VSHP, and IIMI…VKVA.

Belongs to the mitochondrial carrier (TC 2.A.29) family.

The protein resides in the mitochondrion inner membrane. Functionally, transport of phosphate groups from the cytosol to the mitochondrial matrix. The sequence is that of Phosphate carrier protein, mitochondrial from Caenorhabditis elegans.